The primary structure comprises 212 residues: Leucyl/phenylalanyl-tRNA--protein transferase (212 aa).

It belongs to the L/F-transferase family.

It is found in the cytoplasm. The enzyme catalyses N-terminal L-lysyl-[protein] + L-leucyl-tRNA(Leu) = N-terminal L-leucyl-L-lysyl-[protein] + tRNA(Leu) + H(+). It carries out the reaction N-terminal L-arginyl-[protein] + L-leucyl-tRNA(Leu) = N-terminal L-leucyl-L-arginyl-[protein] + tRNA(Leu) + H(+). The catalysed reaction is L-phenylalanyl-tRNA(Phe) + an N-terminal L-alpha-aminoacyl-[protein] = an N-terminal L-phenylalanyl-L-alpha-aminoacyl-[protein] + tRNA(Phe). Its function is as follows. Functions in the N-end rule pathway of protein degradation where it conjugates Leu, Phe and, less efficiently, Met from aminoacyl-tRNAs to the N-termini of proteins containing an N-terminal arginine or lysine. In Jannaschia sp. (strain CCS1), this protein is Leucyl/phenylalanyl-tRNA--protein transferase.